Reading from the N-terminus, the 146-residue chain is Hemoglobin subunit beta (146 aa).

Val1 carries the N-acetylvaline modification. A Globin domain is found at 2-146; sequence HLTAEEKSAV…VANALAHKYH (145 aa). A Phosphothreonine modification is found at Thr12. Residue Lys59 is modified to N6-acetyllysine. His63 contacts heme b. The residue at position 82 (Lys82) is an N6-acetyllysine. His92 is a heme b binding site. Cys93 bears the S-nitrosocysteine mark. N6-acetyllysine is present on Lys144.

Belongs to the globin family. Heterotetramer of two alpha chains and two beta chains. As to expression, red blood cells.

Its function is as follows. Involved in oxygen transport from the lung to the various peripheral tissues. The protein is Hemoglobin subunit beta (HBB) of Balaenoptera acutorostrata (Common minke whale).